Consider the following 436-residue polypeptide: GTPase Der (436 aa).

EngA-type G domains lie at 4 to 167 and 176 to 351; these read PVIA…PKIE and IRFS…ESHS. Residues 10 to 17, 57 to 61, 119 to 122, 182 to 189, 229 to 233, and 294 to 297 each bind GTP; these read GRPNVGKS, DTGGI, NKVD, DTAGM, and NKWD. One can recognise a KH-like domain in the interval 352–436; it reads IRVQTNVLND…PIHIIARARD (85 aa).

It belongs to the TRAFAC class TrmE-Era-EngA-EngB-Septin-like GTPase superfamily. EngA (Der) GTPase family. As to quaternary structure, associates with the 50S ribosomal subunit.

Its function is as follows. GTPase that plays an essential role in the late steps of ribosome biogenesis. This is GTPase Der from Bacillus cereus (strain G9842).